A 496-amino-acid polypeptide reads, in one-letter code: Rhamnulokinase (496 aa).

13-17 (ASSGR) is an ATP binding site. Substrate is bound by residues G83 and 236 to 238 (HDT). Catalysis depends on D237, which acts as the Proton acceptor. An ATP-binding site is contributed by T259. N296 is a substrate binding site. Q304 is an ATP binding site. A disulfide bond links C353 and C370. G402 provides a ligand contact to ATP. C413 and C417 are joined by a disulfide.

Belongs to the rhamnulokinase family. Requires Mg(2+) as cofactor.

The enzyme catalyses L-rhamnulose + ATP = L-rhamnulose 1-phosphate + ADP + H(+). It functions in the pathway carbohydrate degradation; L-rhamnose degradation; glycerone phosphate from L-rhamnose: step 2/3. Its function is as follows. Involved in the catabolism of L-rhamnose (6-deoxy-L-mannose). Catalyzes the transfer of the gamma-phosphate group from ATP to the 1-hydroxyl group of L-rhamnulose to yield L-rhamnulose 1-phosphate. The protein is Rhamnulokinase of Pectobacterium atrosepticum (strain SCRI 1043 / ATCC BAA-672) (Erwinia carotovora subsp. atroseptica).